A 215-amino-acid chain; its full sequence is MADS-box transcription factor 4 (215 aa).

One can recognise an MADS-box domain in the interval 1 to 61 (MGRGKIEIKR…GKLSDYCTPK (61 aa)). Residues 89-175 (HKSLSAEIDR…AFRVHQQEVE (87 aa)) enclose the K-box domain.

In terms of assembly, may interact with the K-box of MADS16. As to expression, highly expressed in lodicules, at intermediate levels in stamens, and weakly in carpels. Expressed in pollen.

It localises to the nucleus. Functionally, probable transcription factor involved in the development of floral organs. B-class protein required for normal development of lodicules and stamens (whorls 2 and 3). May function as a heterodimer with MADS16. This Oryza sativa subsp. japonica (Rice) protein is MADS-box transcription factor 4 (MADS4).